A 153-amino-acid polypeptide reads, in one-letter code: Late embryogenesis abundant protein B19.4 (153 aa).

The segment at M1 to S153 is disordered. Composition is skewed to basic and acidic residues over residues E7–E19, E32–R122, and G133–S153. Tandem repeats lie at residues R43 to H62, K63 to H82, K83 to H102, and K103 to R122. Residues R43–R122 form a 4 X 20 AA tandem repeats region.

It belongs to the small hydrophilic plant seed protein family.

Lea proteins are late embryonic proteins abundant in higher plant seed embryos. The sequence is that of Late embryogenesis abundant protein B19.4 (B19.4) from Hordeum vulgare (Barley).